The sequence spans 968 residues: Glycine dehydrogenase (decarboxylating) (968 aa).

An N6-(pyridoxal phosphate)lysine modification is found at lysine 713.

Belongs to the GcvP family. As to quaternary structure, the glycine cleavage system is composed of four proteins: P, T, L and H. Pyridoxal 5'-phosphate serves as cofactor.

It carries out the reaction N(6)-[(R)-lipoyl]-L-lysyl-[glycine-cleavage complex H protein] + glycine + H(+) = N(6)-[(R)-S(8)-aminomethyldihydrolipoyl]-L-lysyl-[glycine-cleavage complex H protein] + CO2. Its function is as follows. The glycine cleavage system catalyzes the degradation of glycine. The P protein binds the alpha-amino group of glycine through its pyridoxal phosphate cofactor; CO(2) is released and the remaining methylamine moiety is then transferred to the lipoamide cofactor of the H protein. This is Glycine dehydrogenase (decarboxylating) from Variovorax paradoxus (strain S110).